The following is a 218-amino-acid chain: Monomethylamine corrinoid protein 1 (218 aa).

The 91-residue stretch at 1–91 (MANQEIFDKL…ELEKTKVEGE (91 aa)) folds into the B12-binding N-terminal domain. The region spanning 94 to 218 (TGLAITFVAE…AAKVALNIMK (125 aa)) is the B12-binding domain. Histidine 107 contributes to the methylcob(III)alamin binding site.

The protein belongs to the methylamine corrinoid protein family. Can form a complex with MtmB.

It participates in one-carbon metabolism; methanogenesis from methylamine. Its function is as follows. Acts as a methyl group carrier between MtmB and MtbA. The polypeptide is Monomethylamine corrinoid protein 1 (mtmC1) (Methanosarcina acetivorans (strain ATCC 35395 / DSM 2834 / JCM 12185 / C2A)).